The sequence spans 114 residues: Nucleoid-associated protein slr1847 (114 aa).

Belongs to the YbaB/EbfC family. In terms of assembly, homodimer.

The protein localises to the cytoplasm. Its subcellular location is the nucleoid. Functionally, binds to DNA and alters its conformation. May be involved in regulation of gene expression, nucleoid organization and DNA protection. The chain is Nucleoid-associated protein slr1847 from Synechocystis sp. (strain ATCC 27184 / PCC 6803 / Kazusa).